The chain runs to 484 residues: Fork head protein homolog 1 (484 aa).

Residues 76–142 form the FHA domain; the sequence is VTIGRNTDSL…NGAKVNFRRI (67 aa). A DNA-binding region (fork-head) is located at residues 302-393; sequence IKPPQSYASM…RRDFLNKWNA (92 aa).

As to quaternary structure, interacts (via FHA domain) with ECM30, GLN3, URE2, MPH1 AND FDO1. Interacts with the origin recognition complex (ORC) composed of ORC1 to ORC6.

The protein localises to the nucleus. It is found in the cytoplasm. The protein resides in the cytosol. Functionally, transcription factor that regulates the expression of the CLB2 cluster of genes during the G2/M phase of the mitotic cell cycle. The CLB2 cluster of genes includes mitotic regulators such as CLB1, CLB2, CDC5 and CDC20 as well as SWI5 and ACE2, transcription factors required for the subsequent temporal wave of cell cycle regulated gene expression in the M/G1 phase interval. Involved in HMRa silencing. FKH1 and FKH2 associate with the coding regions of active genes and influence, in opposing ways, transcriptional elongation and termination, and coordinate early transcription elongation and pre-mRNA processing. Both FKH1 and FKH2 play a role as regulators of lifespan in collaboration with the anaphase-promoting complex (APC), likely through combined regulation of stress response, genomic stability, and cell cycle regulation. FKH1 and FKH2 function also in controlling yeast cell morphology by preventing preudohyphal growth. Acts as a rate-limiting replication origin activator via its interaction with the origin recognition complex (ORC). Plays a transcription-independent role in recombination donor preference during mating-type switching through binding to the recombination enhancer (RE), a 700-bp cis-acting element that controls recombination along the left arm of chromosome III. In Saccharomyces cerevisiae (strain ATCC 204508 / S288c) (Baker's yeast), this protein is Fork head protein homolog 1.